The primary structure comprises 91 residues: LYR motif-containing protein 4 (91 aa).

Arg6 and Lys44 together coordinate pantetheine 4'-phosphate. N6-succinyllysine is present on Lys47.

This sequence belongs to the complex I LYR family. In terms of assembly, homodimer. Component of the mitochondrial core iron-sulfur cluster (ISC) complex composed of NFS1, LYRM4, NDUFAB1, ISCU, FXN, and FDX2; this complex is a heterohexamer containing two copies of each monomer. Component of the cyteine desulfurase complex composed of NFS1, LYRM4 and NDUFAB1; this complex contributes to the stability and cysteine desulfurase activity of NFS1. Interacts with FXN; this interaction is nickel-dependent. Interacts with the cytoplasmic form of NFS1; the complex increases the stability of NFS1. Forms a complex with the cytoplasmic form of NFS1; this complex increases the stability and cysteine desulfurase activity of NFS1. Interacts with NFS1.

The protein localises to the mitochondrion. It localises to the nucleus. The protein operates within cofactor biosynthesis; iron-sulfur cluster biosynthesis. Stabilizing factor, of the core iron-sulfur cluster (ISC) assembly complex, that regulates, in association with NDUFAB1, the stability and the cysteine desulfurase activity of NFS1 and participates in the [2Fe-2S] clusters assembly on the scaffolding protein ISCU. The core iron-sulfur cluster (ISC) assembly complex is involved in the de novo synthesis of a [2Fe-2S] cluster, the first step of the mitochondrial iron-sulfur protein biogenesis. This process is initiated by the cysteine desulfurase complex (NFS1:LYRM4:NDUFAB1) that produces persulfide which is delivered on the scaffold protein ISCU in a FXN-dependent manner. Then this complex is stabilized by FDX2 which provides reducing equivalents to accomplish the [2Fe-2S] cluster assembly. Finally, the [2Fe-2S] cluster is transferred from ISCU to chaperone proteins, including HSCB, HSPA9 and GLRX5. May also participates in the iron-sulfur protein biogenesis in the cytoplasm through its interaction with the cytoplasmic form of NFS1. This Bos taurus (Bovine) protein is LYR motif-containing protein 4.